A 254-amino-acid chain; its full sequence is Phytolongin Phyl1.1 (254 aa).

A Longin domain is found at 12 to 113; sequence CVSRDNQILY…TAMIGSINVE (102 aa). Residues 138–173 are disordered; it reads ELKSSNLGEQSEGSNSTKAPLLGRLSKQEKKKGKDH. Residues 145–155 are compositionally biased toward polar residues; sequence GEQSEGSNSTK. A helical; Anchor for type IV membrane protein transmembrane segment spans residues 226-246; sequence IVLAIDAAICLTLFGIWLAIC.

It belongs to the synaptobrevin family.

It is found in the membrane. Functionally, non-SNARE longin protein involved in membrane-trafficking machinery. This is Phytolongin Phyl1.1 from Arabidopsis thaliana (Mouse-ear cress).